A 67-amino-acid polypeptide reads, in one-letter code: ATP synthase F(0) complex subunit 8 (67 aa).

A helical membrane pass occupies residues 8-24 (TWFITIISSMATLFILF). An N6-acetyllysine; alternate modification is found at Lys-54. Lys-54 carries the post-translational modification N6-succinyllysine; alternate. Lys-57 carries the N6-acetyllysine modification.

The protein belongs to the ATPase protein 8 family. Component of the ATP synthase complex composed at least of ATP5F1A/subunit alpha, ATP5F1B/subunit beta, ATP5MC1/subunit c (homooctomer), MT-ATP6/subunit a, MT-ATP8/subunit 8, ATP5ME/subunit e, ATP5MF/subunit f, ATP5MG/subunit g, ATP5MK/subunit k, ATP5MJ/subunit j, ATP5F1C/subunit gamma, ATP5F1D/subunit delta, ATP5F1E/subunit epsilon, ATP5PF/subunit F6, ATP5PB/subunit b, ATP5PD/subunit d, ATP5PO/subunit OSCP. ATP synthase complex consists of a soluble F(1) head domain (subunits alpha(3) and beta(3)) - the catalytic core - and a membrane F(0) domain - the membrane proton channel (subunits c, a, 8, e, f, g, k and j). These two domains are linked by a central stalk (subunits gamma, delta, and epsilon) rotating inside the F1 region and a stationary peripheral stalk (subunits F6, b, d, and OSCP). Interacts with PRICKLE3.

It is found in the mitochondrion membrane. Its function is as follows. Subunit 8, of the mitochondrial membrane ATP synthase complex (F(1)F(0) ATP synthase or Complex V) that produces ATP from ADP in the presence of a proton gradient across the membrane which is generated by electron transport complexes of the respiratory chain. ATP synthase complex consist of a soluble F(1) head domain - the catalytic core - and a membrane F(1) domain - the membrane proton channel. These two domains are linked by a central stalk rotating inside the F(1) region and a stationary peripheral stalk. During catalysis, ATP synthesis in the catalytic domain of F(1) is coupled via a rotary mechanism of the central stalk subunits to proton translocation. In vivo, can only synthesize ATP although its ATP hydrolase activity can be activated artificially in vitro. Part of the complex F(0) domain. In Rattus norvegicus (Rat), this protein is ATP synthase F(0) complex subunit 8.